Reading from the N-terminus, the 217-residue chain is N-(5'-phosphoribosyl)anthranilate isomerase (217 aa).

The protein belongs to the TrpF family.

It catalyses the reaction N-(5-phospho-beta-D-ribosyl)anthranilate = 1-(2-carboxyphenylamino)-1-deoxy-D-ribulose 5-phosphate. The protein operates within amino-acid biosynthesis; L-tryptophan biosynthesis; L-tryptophan from chorismate: step 3/5. This chain is N-(5'-phosphoribosyl)anthranilate isomerase, found in Chlorobium luteolum (strain DSM 273 / BCRC 81028 / 2530) (Pelodictyon luteolum).